A 41-amino-acid polypeptide reads, in one-letter code: Conotoxin Ac4.2 (41 aa).

Positions 1-11 are excised as a propeptide; sequence FDGRNAAVNER. Position 13 is a 4-hydroxyproline (Pro13). Thr18 and Thr20 each carry an O-linked (HexNAc...) threonine glycan. 4-hydroxyproline is present on residues Pro29 and Pro33. Cys40 carries the post-translational modification Cysteine amide.

Belongs to the conotoxin A superfamily. Contains 3 disulfide bonds. In terms of tissue distribution, expressed by the venom duct.

Its subcellular location is the secreted. Its function is as follows. Probable neurotoxin with ion channel inhibitor activity. The sequence is that of Conotoxin Ac4.2 from Conus achatinus (Little frog cone).